Here is a 524-residue protein sequence, read N- to C-terminus: Alanine aminotransferase 2 (524 aa).

N6-(pyridoxal phosphate)lysine is present on Lys342.

The protein belongs to the class-I pyridoxal-phosphate-dependent aminotransferase family. Alanine aminotransferase subfamily. As to quaternary structure, homodimer. Pyridoxal 5'-phosphate serves as cofactor.

It carries out the reaction L-alanine + 2-oxoglutarate = pyruvate + L-glutamate. It functions in the pathway amino-acid degradation; L-alanine degradation via transaminase pathway; pyruvate from L-alanine: step 1/1. Catalyzes the reversible transamination between alanine and 2-oxoglutarate to form pyruvate and glutamate. The sequence is that of Alanine aminotransferase 2 (gpt2) from Xenopus tropicalis (Western clawed frog).